The sequence spans 523 residues: GMP synthase [glutamine-hydrolyzing] (523 aa).

The Glutamine amidotransferase type-1 domain occupies 8-205 (KILILDFGSQ…VVNICGCTTN (198 aa)). C85 serves as the catalytic Nucleophile. Residues H179 and E181 contribute to the active site. Residues 206–398 (WTPENIIEDA…LGLPAEMLNR (193 aa)) form the GMPS ATP-PPase domain. 233 to 239 (SGGVDSS) contacts ATP.

In terms of assembly, homodimer.

The catalysed reaction is XMP + L-glutamine + ATP + H2O = GMP + L-glutamate + AMP + diphosphate + 2 H(+). It participates in purine metabolism; GMP biosynthesis; GMP from XMP (L-Gln route): step 1/1. Functionally, catalyzes the synthesis of GMP from XMP. This chain is GMP synthase [glutamine-hydrolyzing], found in Mannheimia succiniciproducens (strain KCTC 0769BP / MBEL55E).